Reading from the N-terminus, the 1192-residue chain is Probable phospholipid-transporting ATPase IM (1192 aa).

Topologically, residues 1-44 are cytoplasmic; sequence MFCSEKKLREVERIVKANDREYNEKFQYADNRIHTSKYNILTFL. The chain crosses the membrane as a helical span at residues 45–66; it reads PINLFEQFQRVANAYFLCLLIL. The Exoplasmic loop portion of the chain corresponds to 67–72; it reads QLIPEI. Residues 73–92 form a helical membrane-spanning segment; it reads SSLTWFTTIVPLVLVITMTA. The Cytoplasmic segment spans residues 93–276; the sequence is VKDATDDYFR…TSIDRLMNTL (184 aa). The chain crosses the membrane as a helical span at residues 277–298; that stretch reads VLWIFGFLICLGIILAIGNSIW. Over 299-327 the chain is Exoplasmic loop; that stretch reads ESQTGDQFRTFLFWNEGEKSSVFSGFLTF. The chain crosses the membrane as a helical span at residues 328 to 349; it reads WSYIIILNTVVPISLYVSVEVI. Over 350–871 the chain is Cytoplasmic; that stretch reads RLGHSYFINW…GRWSYFRMCK (522 aa). Asp392 serves as the catalytic 4-aspartylphosphate intermediate. Positions 392, 393, 394, 496, 537, 560, 594, 674, 675, 676, 789, and 795 each coordinate ATP. A Mg(2+)-binding site is contributed by Asp392. Thr394 serves as a coordination point for Mg(2+). Asp815 contributes to the Mg(2+) binding site. ATP-binding residues include Asn818 and Asp819. Mg(2+) is bound at residue Asp819. Residues 872–892 traverse the membrane as a helical segment; that stretch reads FLCYFFYKNFAFTLVHFWFGF. Over 893-904 the chain is Exoplasmic loop; it reads FCGFSAQTVYDQ. The helical transmembrane segment at 905–924 threads the bilayer; the sequence is WFITLFNIVYTSLPVLAMGI. Over 925–954 the chain is Cytoplasmic; that stretch reads FDQDVSDQNSVDCPQLYKPGQLNLLFNKRK. The helical transmembrane segment at 955 to 976 threads the bilayer; that stretch reads FFICVLHGIYTSLVLFFIPYGA. Topologically, residues 977–990 are exoplasmic loop; the sequence is FYNVAGEDGQHIAD. A helical membrane pass occupies residues 991–1013; sequence YQSFAVTMATSLVIVVSVQIALD. Topologically, residues 1014-1019 are cytoplasmic; that stretch reads TSYWTF. A helical transmembrane segment spans residues 1020 to 1040; that stretch reads INHVFIWGSIAIYFSILFTMH. Residues 1041–1060 are Exoplasmic loop-facing; it reads SNGIFGIFPNQFPFVGNARH. Residues 1061-1085 traverse the membrane as a helical segment; that stretch reads SLTQKCIWLVILLTTVASVMPVVAF. At 1086-1192 the chain is on the cytoplasmic side; sequence RFLKVDLYPT…SFSQDKTVKL (107 aa). Basic residues predominate over residues 1104–1125; that stretch reads QKAQKKARPPSSRRPRTRRSSS. Disordered regions lie at residues 1104-1130 and 1143-1163; these read QKAQ…RSGY and TSGK…EKTH.

This sequence belongs to the cation transport ATPase (P-type) (TC 3.A.3) family. Type IV subfamily. As to quaternary structure, component of a P4-ATPase flippase complex which consists of a catalytic alpha subunit and an accessory beta subunit. Interacts with beta subunits TMEM30A and TMEM30B. Requires Mg(2+) as cofactor. As to expression, ubiquitously expressed at moderate levels.

The protein resides in the cell membrane. It is found in the golgi apparatus. It catalyses the reaction ATP + H2O + phospholipidSide 1 = ADP + phosphate + phospholipidSide 2.. Functionally, component of a P4-ATPase flippase complex which catalyzes the hydrolysis of ATP coupled to the transport of aminophospholipids from the outer to the inner leaflet of various membranes and ensures the maintenance of asymmetric distribution of phospholipids. Phospholipid translocation also seems to be implicated in vesicle formation and in uptake of lipid signaling molecules. This is Probable phospholipid-transporting ATPase IM (ATP8B4) from Homo sapiens (Human).